The chain runs to 686 residues: Bromodomain-containing factor 1 (686 aa).

2 disordered regions span residues 1–69 (MTDI…PAGL) and 85–150 (NGYN…NPIP). The segment covering 9–25 (NDVDVNGNNVNDDVSSN) has biased composition (low complexity). Residues 99–120 (QGLKKEEGGQGTKQEDLDENSK) show a composition bias toward basic and acidic residues. A compositionally biased stretch (pro residues) spans 130–139 (EPAPAPPPEP). Residues 145-254 (PQNPIPKHQQ…ASFEKHMLNM (110 aa)) form the Bromo 1 domain. S270 is modified (phosphoserine). A disordered region spans residues 283 to 304 (QTHNGRPKRTIHPPKSKDIYPY). Basic residues predominate over residues 287-296 (GRPKRTIHPP). The 110-residue stretch at 312-421 (KRLQQAMKFC…EVFNSKWADR (110 aa)) folds into the Bromo 2 domain. Disordered regions lie at residues 424–447 (LDDYDSDEDSRTQGDYDDYESEYS), 486–523 (IRKERRLARGSKKRGKRSKGRSGSKNASSKGRRDKKNK), 594–636 (SSGA…EQSR), and 649–686 (DSASPLSQNGSPGQIQSAAHNGFSSSSDDDVSSESEEE). The residue at position 429 (S429) is a Phosphoserine. Over residues 438–447 (DYDDYESEYS) the composition is skewed to acidic residues. The stretch at 460–499 (AIQYLEEQLARMKVELQQLKKQELEKIRKERRLARGSKKR) forms a coiled coil. Positions 488 to 507 (KERRLARGSKKRGKRSKGRS) are enriched in basic residues. The NET domain maps to 518–598 (RDKKNKLKTV…RQYESSSGAS (81 aa)). Polar residues-rich tracts occupy residues 594–620 (SSGASNGLDGTSGVTRDASSLSPTSAG) and 652–671 (SPLSQNGSPGQIQSAAHNGF). Residues S615 and S659 each carry the phosphoserine modification. The span at 675-686 (SDDDVSSESEEE) shows a compositional bias: acidic residues.

This sequence belongs to the BET family. In terms of assembly, interacts with the TFIID subunit TAF7 and with acetylated histones H3 and H4. Phosphorylated by the casein kinase CK2 complex.

It localises to the nucleus. Functionally, transcription factor involved in the expression of a broad class of genes including snRNAs. Required for sporulation and DNA-damage repair. Prevents the spreading of SIR silencing at telomeres and protects histone H4, but not H3, from deacetylation. The protein is Bromodomain-containing factor 1 (BDF1) of Saccharomyces cerevisiae (strain ATCC 204508 / S288c) (Baker's yeast).